We begin with the raw amino-acid sequence, 203 residues long: Urease accessory protein UreG (203 aa).

14-21 (GPVGAGKT) serves as a coordination point for GTP.

This sequence belongs to the SIMIBI class G3E GTPase family. UreG subfamily. In terms of assembly, homodimer. UreD, UreF and UreG form a complex that acts as a GTP-hydrolysis-dependent molecular chaperone, activating the urease apoprotein by helping to assemble the nickel containing metallocenter of UreC. The UreE protein probably delivers the nickel.

It localises to the cytoplasm. Its function is as follows. Facilitates the functional incorporation of the urease nickel metallocenter. This process requires GTP hydrolysis, probably effectuated by UreG. This chain is Urease accessory protein UreG, found in Jannaschia sp. (strain CCS1).